The following is a 312-amino-acid chain: Olfactory receptor 2C1 (312 aa).

Topologically, residues 1-24 (MEVDSNSSSGSFILMGVSDHPHLE) are extracellular. An N-linked (GlcNAc...) asparagine glycan is attached at asparagine 6. Residues 25-48 (IIFFAVILASYLLTLVGNLTIILL) traverse the membrane as a helical segment. At 49–57 (SRLDARLHT) the chain is on the cytoplasmic side. A helical membrane pass occupies residues 58–79 (PMYFFLSNLSSLDLAFTTSSVP). Over 80–100 (QMLKNLWGPDKTISYGGCVTQ) the chain is Extracellular. Cysteine 97 and cysteine 189 are joined by a disulfide. A helical membrane pass occupies residues 101–120 (LYVFLWLGATECILLVVMAF). Residues 121–139 (DRYVAVCRPLHYMTVMNPR) lie on the Cytoplasmic side of the membrane. A helical membrane pass occupies residues 140 to 160 (LCWGLAAISWLGGLGNSVIQS). Residues 161 to 200 (TFTLQLPFCGHRKVDNFLCEVPAMIKLACGDTSLNEAVLN) are Extracellular-facing. The helical transmembrane segment at 201–222 (GVCTFFTVVPVSVILVSYCFIA) threads the bilayer. The Cytoplasmic portion of the chain corresponds to 223–236 (QAVMKIRSVEGRRK). Residues 237–261 (AFNTCVSHLVVVFLFYGSAIYGYLL) traverse the membrane as a helical segment. The Extracellular segment spans residues 262–272 (PAKSSNQSQGK). Residues 273–292 (FISLFYSVVTPMVNPLIYTL) form a helical membrane-spanning segment. The Cytoplasmic portion of the chain corresponds to 293 to 312 (RNKEVKGALGRLLGKGRGAS).

Belongs to the G-protein coupled receptor 1 family. As to expression, olfactory epithelium. Present in various subcellular compartments of the olfactory sensory neurons, particularly in the axonal processes and neve terminals.

It localises to the cell membrane. Its function is as follows. Olfactory receptor that is activated by the binding of organosulfur odorants with thioether groups such as (methylthio)methanetiol (MTMT). Also binds odorants acetophenone and benzaldehyde. The activity of this receptor is mediated by G proteins which activate adenylyl cyclase. May be involved in the molecular processes underlying fasciculation and targeting of olfactory axons. The protein is Olfactory receptor 2C1 of Mus musculus (Mouse).